A 592-amino-acid chain; its full sequence is A-type ATP synthase subunit A (592 aa).

Residue 233–240 coordinates ATP; it reads GPFGSGKT.

The protein belongs to the ATPase alpha/beta chains family. In terms of assembly, has multiple subunits with at least A(3), B(3), C, D, E, F, H, I and proteolipid K(x).

The protein resides in the cell membrane. It carries out the reaction ATP + H2O + 4 H(+)(in) = ADP + phosphate + 5 H(+)(out). Its function is as follows. Component of the A-type ATP synthase that produces ATP from ADP in the presence of a proton gradient across the membrane. The A chain is the catalytic subunit. This is A-type ATP synthase subunit A from Saccharolobus islandicus (strain M.16.27) (Sulfolobus islandicus).